A 283-amino-acid chain; its full sequence is Protein FAM170A (283 aa).

Disordered stretches follow at residues 1-54 (MKRR…RSQH) and 123-171 (GTPP…AKTP). Residues 127 to 138 (SDVSTRNLLSDS) are compositionally biased toward polar residues. Basic and acidic residues predominate over residues 142–153 (GEEKEHEERTES). Threonine 170 carries the post-translational modification Phosphothreonine. The C2H2-type; degenerate zinc-finger motif lies at 181-205 (FRCMACCRVFTTMEALQEHVQFGIR). The segment at 223 to 283 (NMESESTQDE…VFHSPKDRNS (61 aa)) is disordered. Positions 228-246 (STQDEQEEENGNEKEEEEK) are enriched in acidic residues. At serine 268 the chain carries Phosphoserine.

It belongs to the FAM170 family.

The protein localises to the nucleus. Functionally, acts as a nuclear transcription factor that positively regulates the expression of heat shock genes. Binds to heat shock promoter elements (HSE). The protein is Protein FAM170A (FAM170A) of Macaca fascicularis (Crab-eating macaque).